The primary structure comprises 774 residues: 1,4-alpha-glucan branching enzyme GlgB 1 (774 aa).

Residues 1 to 66 are disordered; it reads MTPRPSSSGP…AEVAVSPAPD (66 aa). Residues 29 to 40 are compositionally biased toward basic residues; sequence KPAKAAKKKAPR. Low complexity predominate over residues 41 to 55; it reads RTTASANASATTSVS. The active-site Nucleophile is Asp-457. Residue Glu-510 is the Proton donor of the active site. The segment at 748-774 is disordered; that stretch reads YGGGDVVNPDPVKPEPQGGTAARRASG.

This sequence belongs to the glycosyl hydrolase 13 family. GlgB subfamily. Monomer.

It carries out the reaction Transfers a segment of a (1-&gt;4)-alpha-D-glucan chain to a primary hydroxy group in a similar glucan chain.. It functions in the pathway glycan biosynthesis; glycogen biosynthesis. Its function is as follows. Catalyzes the formation of the alpha-1,6-glucosidic linkages in glycogen by scission of a 1,4-alpha-linked oligosaccharide from growing alpha-1,4-glucan chains and the subsequent attachment of the oligosaccharide to the alpha-1,6 position. The chain is 1,4-alpha-glucan branching enzyme GlgB 1 (glgB1) from Streptomyces coelicolor (strain ATCC BAA-471 / A3(2) / M145).